Here is a 263-residue protein sequence, read N- to C-terminus: Probable ribosomal RNA small subunit methyltransferase A (263 aa).

S-adenosyl-L-methionine is bound by residues Leu12, Gly37, Glu58, Asp83, and Asn100.

Belongs to the class I-like SAM-binding methyltransferase superfamily. rRNA adenine N(6)-methyltransferase family. RsmA subfamily.

It is found in the cytoplasm. Its function is as follows. Specifically dimethylates two adjacent adenosines in the loop of a conserved hairpin near the 3'-end of 16S rRNA in the 30S particle. May play a critical role in biogenesis of 30S subunits. This is Probable ribosomal RNA small subunit methyltransferase A from Methanococcus maripaludis (strain C5 / ATCC BAA-1333).